The sequence spans 197 residues: Peptidyl-tRNA hydrolase (197 aa).

Tyr-18 contacts tRNA. His-23 acts as the Proton acceptor in catalysis. Residues Tyr-68, Asn-70, and Asn-116 each coordinate tRNA.

This sequence belongs to the PTH family. As to quaternary structure, monomer.

It is found in the cytoplasm. The enzyme catalyses an N-acyl-L-alpha-aminoacyl-tRNA + H2O = an N-acyl-L-amino acid + a tRNA + H(+). Hydrolyzes ribosome-free peptidyl-tRNAs (with 1 or more amino acids incorporated), which drop off the ribosome during protein synthesis, or as a result of ribosome stalling. In terms of biological role, catalyzes the release of premature peptidyl moieties from peptidyl-tRNA molecules trapped in stalled 50S ribosomal subunits, and thus maintains levels of free tRNAs and 50S ribosomes. The sequence is that of Peptidyl-tRNA hydrolase from Desulfotalea psychrophila (strain LSv54 / DSM 12343).